Consider the following 582-residue polypeptide: Semenogelin-2 (582 aa).

A signal peptide spans 1–23 (MKSIILFVLSLLLILEKQAAVMG). Disordered stretches follow at residues 25 to 62 (KGGS…SKGS), 131 to 156 (KGGQ…KGIF), 173 to 192 (KEQA…GSQS), 272 to 477 (NLNQ…EQRQ), and 502 to 554 (VEGK…SGAH). Residues 50-59 (GQKDKQHTES) are compositionally biased toward basic and acidic residues. Composition is skewed to polar residues over residues 137–151 (HGTQ…NSPS) and 174–192 (EQAS…GSQS). Residues 292-310 (RTEERQLNHGEKSVQKDVS) show a composition bias toward basic and acidic residues. Positions 325-335 (KSQNQVTIPSQ) are enriched in polar residues. Residues 336-345 (DQEHGHKENK) are compositionally biased toward basic and acidic residues. The segment covering 385-395 (KSQNQVTIPSQ) has biased composition (polar residues). Basic and acidic residues predominate over residues 396–405 (DQEHGHKENK). The span at 445–455 (KSQNQVTIPSQ) shows a compositional bias: polar residues. A compositionally biased stretch (basic and acidic residues) spans 456–465 (DQEHGHKENK). Composition is skewed to polar residues over residues 466–477 (ISYQSSSTEQRQ) and 506–529 (SQIQ…NSGK). Basic and acidic residues predominate over residues 537 to 546 (LLSHEQEGRY).

The protein belongs to the semenogelin family. In terms of assembly, interacts with SERPINA5.

The protein resides in the secreted. In terms of biological role, participates in the formation of a gel matrix (sperm coagulum) entrapping the accessory gland secretions and ejaculated spermatozoa. This chain is Semenogelin-2 (SEMG2), found in Macaca nemestrina (Pig-tailed macaque).